The following is a 121-amino-acid chain: Large ribosomal subunit protein uL18 (121 aa).

This sequence belongs to the universal ribosomal protein uL18 family. Part of the 50S ribosomal subunit; part of the 5S rRNA/L5/L18/L25 subcomplex. Contacts the 5S and 23S rRNAs.

In terms of biological role, this is one of the proteins that bind and probably mediate the attachment of the 5S RNA into the large ribosomal subunit, where it forms part of the central protuberance. This chain is Large ribosomal subunit protein uL18, found in Thermoanaerobacter pseudethanolicus (strain ATCC 33223 / 39E) (Clostridium thermohydrosulfuricum).